Reading from the N-terminus, the 189-residue chain is Ion-translocating oxidoreductase complex subunit B (189 aa).

A hydrophobic region spans residues 1 to 26; that stretch reads MSGIFIAIILLTILALLFGILLGFAA. In terms of domain architecture, 4Fe-4S spans 32-90; it reads EGDPLVDQLEALLPQTQCGQCGYPGCRPYAEAIANGEKINLCPPGGSATMEKLAEMAGV. 12 residues coordinate [4Fe-4S] cluster: Cys-49, Cys-52, Cys-57, Cys-73, Cys-114, Cys-117, Cys-120, Cys-124, Cys-144, Cys-147, Cys-150, and Cys-154. 2 4Fe-4S ferredoxin-type domains span residues 105–134 and 135–164; these read KVAY…GSGK and LMHT…MLPV.

This sequence belongs to the 4Fe4S bacterial-type ferredoxin family. RnfB subfamily. The complex is composed of six subunits: RnfA, RnfB, RnfC, RnfD, RnfE and RnfG. The cofactor is [4Fe-4S] cluster.

Its subcellular location is the cell inner membrane. Its function is as follows. Part of a membrane-bound complex that couples electron transfer with translocation of ions across the membrane. The polypeptide is Ion-translocating oxidoreductase complex subunit B (Shewanella sediminis (strain HAW-EB3)).